The sequence spans 442 residues: 4-hydroxyphenylpyruvate dioxygenase (442 aa).

VOC domains follow at residues 45 to 200 (RFHH…GFEA) and 216 to 376 (RLDH…IFTK). Residues H219, H301, and E387 each contribute to the Fe cation site.

This sequence belongs to the 4HPPD family. It depends on Fe cation as a cofactor.

The protein resides in the cytoplasm. The catalysed reaction is 3-(4-hydroxyphenyl)pyruvate + O2 = homogentisate + CO2. It participates in amino-acid degradation; L-phenylalanine degradation; acetoacetate and fumarate from L-phenylalanine: step 3/6. Its pathway is cofactor biosynthesis; prenylquinone biosynthesis. The sequence is that of 4-hydroxyphenylpyruvate dioxygenase from Daucus carota (Wild carrot).